The primary structure comprises 132 residues: L-ectoine synthase (132 aa).

Belongs to the ectoine synthase family.

The catalysed reaction is (2S)-4-acetamido-2-aminobutanoate = L-ectoine + H2O. Its pathway is amine and polyamine biosynthesis; ectoine biosynthesis; L-ectoine from L-aspartate 4-semialdehyde: step 3/3. In terms of biological role, catalyzes the circularization of gamma-N-acetyl-alpha,gamma-diaminobutyric acid (ADABA) to ectoine (1,4,5,6-tetrahydro-2-methyl-4-pyrimidine carboxylic acid), which is an excellent osmoprotectant. The protein is L-ectoine synthase (ectC) of Streptomyces anulatus (Streptomyces chrysomallus).